The sequence spans 491 residues: Katanin p60 ATPase-containing subunit A1 (491 aa).

The tract at residues methionine 1 to tyrosine 29 is interaction with KATNB1. Residues methionine 1–serine 75 are interaction with dynein and NDEL1. An interaction with microtubules region spans residues methionine 1–threonine 185. Serine 42 is subject to Phosphoserine; by DYRK2. Residues glutamine 87–aspartate 183 form a disordered region. Residues histidine 145–lysine 169 show a composition bias toward basic and acidic residues. Residue glycine 249–threonine 256 coordinates ATP.

The protein belongs to the AAA ATPase family. Katanin p60 subunit A1 subfamily. In terms of assembly, can homooligomerize into hexameric rings, which may be promoted by interaction with microtubules. Interacts with KATNB1, which may serve as a targeting subunit. Interacts with ASPM; the katanin complex formation KATNA1:KATNB1 is required for the association of ASPM. Interacts with dynein and NDEL1. Associates with the E3 ligase complex containing DYRK2, EDD/UBR5, DDB1 and DCAF1 proteins (EDVP complex). Interacts with KLHL42 (via the kelch domains). Interacts with CUL3; the interaction is enhanced by KLHL42. Interacts with KATNB1 and KATNBL1. In terms of processing, phosphorylation by DYRK2 triggers ubiquitination and subsequent degradation. Post-translationally, ubiquitinated by the BCR(KLHL42) E3 ubiquitin ligase complex, leading to its proteasomal degradation. Ubiquitinated by the EDVP E3 ligase complex and subsequently targeted for proteasomal degradation.

It is found in the cytoplasm. The protein localises to the midbody. Its subcellular location is the cytoskeleton. The protein resides in the microtubule organizing center. It localises to the centrosome. It is found in the spindle pole. The protein localises to the spindle. The catalysed reaction is n ATP + n H2O + a microtubule = n ADP + n phosphate + (n+1) alpha/beta tubulin heterodimers.. Its activity is regulated as follows. ATPase activity is stimulated by microtubules, which promote homooligomerization. ATP-dependent microtubule severing is stimulated by interaction with KATNB1. Catalytic subunit of a complex which severs microtubules in an ATP-dependent manner. Microtubule severing may promote rapid reorganization of cellular microtubule arrays and the release of microtubules from the centrosome following nucleation. Microtubule release from the mitotic spindle poles may allow depolymerization of the microtubule end proximal to the spindle pole, leading to poleward microtubule flux and poleward motion of chromosome. Microtubule release within the cell body of neurons may be required for their transport into neuronal processes by microtubule-dependent motor proteins. This transport is required for axonal growth. The protein is Katanin p60 ATPase-containing subunit A1 (Katna1) of Rattus norvegicus (Rat).